Consider the following 300-residue polypeptide: Porphobilinogen deaminase (300 aa).

Cysteine 239 bears the S-(dipyrrolylmethanemethyl)cysteine mark.

It belongs to the HMBS family. In terms of assembly, monomer. Dipyrromethane is required as a cofactor.

The enzyme catalyses 4 porphobilinogen + H2O = hydroxymethylbilane + 4 NH4(+). The protein operates within porphyrin-containing compound metabolism; protoporphyrin-IX biosynthesis; coproporphyrinogen-III from 5-aminolevulinate: step 2/4. Tetrapolymerization of the monopyrrole PBG into the hydroxymethylbilane pre-uroporphyrinogen in several discrete steps. This is Porphobilinogen deaminase from Francisella tularensis subsp. holarctica (strain FTNF002-00 / FTA).